Consider the following 315-residue polypeptide: Microtubule-associated protein Jupiter (315 aa).

Positions 1-14 (MISNFDCTDNQASS) are enriched in polar residues. Disordered stretches follow at residues 1–37 (MISNFDCTDNQASSKVLRPPGGGSSDIFGSEMPQTPR) and 51–89 (EKDNGVKNNGDAPRRGQKTVDSHSRLFGEPTRPITPGKN). Phosphoserine is present on S24. T35 is modified (phosphothreonine). Basic and acidic residues predominate over residues 62-76 (APRRGQKTVDSHSRL). A phosphothreonine mark is found at T81 and T85. Residues S94, S122, and S133 each carry the phosphoserine modification. 2 disordered regions span residues 116 to 166 (YNGK…ADDA) and 272 to 315 (EGNP…SGLW). A compositionally biased stretch (low complexity) spans 120–133 (SGSVSSASSSVSSS). Composition is skewed to polar residues over residues 134–148 (TENLKMNSGSRSVFR) and 285–296 (DFTQRQESSNGG).

Belongs to the MAP Jupiter family.

Its subcellular location is the nucleus. It is found in the cytoplasm. The protein localises to the cytoskeleton. It localises to the spindle. Binds to all microtubule populations. The protein is Microtubule-associated protein Jupiter of Drosophila sechellia (Fruit fly).